Consider the following 701-residue polypeptide: uncharacterized protein (701 aa).

This is an uncharacterized protein from Saccharomyces cerevisiae (strain ATCC 204508 / S288c) (Baker's yeast).